A 227-amino-acid polypeptide reads, in one-letter code: Phosphoribosylformylglycinamidine synthase subunit PurQ (227 aa).

The 223-residue stretch at 3–225 (FAVIVFPGSN…LKQWRETYVV (223 aa)) folds into the Glutamine amidotransferase type-1 domain. Residue C86 is the Nucleophile of the active site. Residues H194 and E196 contribute to the active site.

In terms of assembly, part of the FGAM synthase complex composed of 1 PurL, 1 PurQ and 2 PurS subunits.

The protein localises to the cytoplasm. It carries out the reaction N(2)-formyl-N(1)-(5-phospho-beta-D-ribosyl)glycinamide + L-glutamine + ATP + H2O = 2-formamido-N(1)-(5-O-phospho-beta-D-ribosyl)acetamidine + L-glutamate + ADP + phosphate + H(+). The catalysed reaction is L-glutamine + H2O = L-glutamate + NH4(+). It participates in purine metabolism; IMP biosynthesis via de novo pathway; 5-amino-1-(5-phospho-D-ribosyl)imidazole from N(2)-formyl-N(1)-(5-phospho-D-ribosyl)glycinamide: step 1/2. In terms of biological role, part of the phosphoribosylformylglycinamidine synthase complex involved in the purines biosynthetic pathway. Catalyzes the ATP-dependent conversion of formylglycinamide ribonucleotide (FGAR) and glutamine to yield formylglycinamidine ribonucleotide (FGAM) and glutamate. The FGAM synthase complex is composed of three subunits. PurQ produces an ammonia molecule by converting glutamine to glutamate. PurL transfers the ammonia molecule to FGAR to form FGAM in an ATP-dependent manner. PurS interacts with PurQ and PurL and is thought to assist in the transfer of the ammonia molecule from PurQ to PurL. The sequence is that of Phosphoribosylformylglycinamidine synthase subunit PurQ from Bacillus thuringiensis (strain Al Hakam).